The primary structure comprises 611 residues: Chaperonin 60 subunit beta 4, chloroplastic (611 aa).

The N-terminal 37 residues, 1–37, are a transit peptide targeting the chloroplast; that stretch reads MAFSQAALSALPLSDRTFRKKPSSSSSSSPNFVLRVR. Positions 377-480 form a coiled coil; the sequence is QKAVDERVSQ…LDNTEQKIGA (104 aa). Residues 574-595 are disordered; that stretch reads INPPLPTSSPATSSMFPDRKLP.

The protein belongs to the chaperonin (HSP60) family. Part of the Cpn60 complex composed of 7 alpha and 7 beta subunits. Can also form a complex composed of 14 beta subunits only. Both complexes show ATPase activity. The Cpn60 complex interacts with the Cpn10 complex. Interacts with NDHH.

It is found in the plastid. The protein localises to the chloroplast stroma. Functionally, involved specifically in the folding of NDHH, a subunit of the chloroplast NADH dehydrogenase-like complex (NDH). This Arabidopsis thaliana (Mouse-ear cress) protein is Chaperonin 60 subunit beta 4, chloroplastic (CPN60B4).